A 25-amino-acid chain; its full sequence is Small ribosomal subunit protein uS19 (25 aa).

The tract at residues 1–25 is disordered; that stretch reads GHKLGEFAPTRTFRGHKKEDKKVKR.

Belongs to the universal ribosomal protein uS19 family.

Its function is as follows. Protein S19 forms a complex with S13 that binds strongly to the 16S ribosomal RNA. In Acholeplasma laidlawii, this protein is Small ribosomal subunit protein uS19 (rpsS).